We begin with the raw amino-acid sequence, 110 residues long: Acid stress chaperone HdeA (110 aa).

Positions Met-1–Ala-21 are cleaved as a signal peptide. A disulfide bridge connects residues Cys-39 and Cys-87.

Belongs to the HdeA family.

It localises to the periplasm. Its function is as follows. Required for optimal acid stress protection. Exhibits a chaperone-like activity only at low pH by suppressing non-specifically the aggregation of denaturated periplasmic proteins. The chain is Acid stress chaperone HdeA from Escherichia coli O157:H7.